A 236-amino-acid chain; its full sequence is tRNA1(Val) (adenine(37)-N6)-methyltransferase (236 aa).

This sequence belongs to the methyltransferase superfamily. tRNA (adenine-N(6)-)-methyltransferase family.

It is found in the cytoplasm. It catalyses the reaction adenosine(37) in tRNA1(Val) + S-adenosyl-L-methionine = N(6)-methyladenosine(37) in tRNA1(Val) + S-adenosyl-L-homocysteine + H(+). Functionally, specifically methylates the adenine in position 37 of tRNA(1)(Val) (anticodon cmo5UAC). This Histophilus somni (strain 2336) (Haemophilus somnus) protein is tRNA1(Val) (adenine(37)-N6)-methyltransferase.